A 754-amino-acid polypeptide reads, in one-letter code: 17S U2 SnRNP complex component HTATSF1 (754 aa).

Disordered regions lie at residues Met-1–Asp-53 and Gly-81–Ser-122. Position 2 is an N-acetylserine (Ser-2). Positions Glu-90–Ser-122 are enriched in basic and acidic residues. RRM domains follow at residues Thr-133–Phe-218 and Arg-264–Gly-349. Residues Arg-259–Tyr-353 are U2AF homology motif (UHM). Position 297 is an N6-acetyllysine (Lys-297). Positions Arg-380 to Glu-415 are disordered. Residues Gly-381–Ile-754 are mediates interaction with the P-TEFb complex. Phosphoserine is present on residues Ser-387, Ser-403, Ser-407, and Ser-409. A compositionally biased stretch (polar residues) spans His-405–Glu-415. Residues Lys-429 and Lys-430 each participate in a glycyl lysine isopeptide (Lys-Gly) (interchain with G-Cter in SUMO2) cross-link. Residues Lys-433 to Ile-754 are disordered. A phosphoserine mark is found at Ser-445, Ser-452, and Ser-453. A compositionally biased stretch (basic and acidic residues) spans Cys-462–Phe-476. 6 positions are modified to phosphoserine: Ser-481, Ser-485, Ser-494, Ser-498, Ser-521, and Ser-529. Basic and acidic residues predominate over residues Leu-508–Glu-538. Residues Ser-539–Cys-552 are compositionally biased toward acidic residues. The span at Ser-553 to Arg-563 shows a compositional bias: basic and acidic residues. Ser-557, Ser-561, and Ser-579 each carry phosphoserine. Over residues Glu-564 to Ser-579 the composition is skewed to acidic residues. The segment covering Glu-580–Lys-590 has biased composition (basic and acidic residues). Positions Glu-591–Gly-606 are enriched in acidic residues. Residues Ser-597, Ser-600, Ser-607, Ser-616, and Ser-624 each carry the phosphoserine modification. Composition is skewed to acidic residues over residues Glu-613–Thr-633 and Asp-640–Ala-651. Residue Thr-633 is modified to Phosphothreonine. Residue Ser-642 is modified to Phosphoserine. Residues Asp-652–Glu-674 show a composition bias toward basic and acidic residues. The span at Glu-675–Ser-713 shows a compositional bias: acidic residues. Residues Ser-676, Ser-702, Ser-713, Ser-721, and Ser-748 each carry the phosphoserine modification. Residues Asn-714 to Gly-725 show a composition bias toward basic and acidic residues.

This sequence belongs to the HTATSF1 family. In terms of assembly, component of the 17S U2 SnRNP complex, a ribonucleoprotein complex that contains small nuclear RNA (snRNA) U2 and a number of specific proteins. Within the 17S U2 SnRNP complex, interacts (via UHM region) directly with SF3B1. Component of a complex which is at least composed of HTATSF1/Tat-SF1, the P-TEFb complex components CDK9 and CCNT1, RNA polymerase II, SUPT5H, and NCL/nucleolin. Interacts with GTF2F2/RAP30 and POLR2A. Interacts with TCERG1/CA150. Interacts with (poly-ADP-ribosylated) RPA1; promoting HTATSF1 recruitment to DNA damage sites. Interacts (when phosphorylated) with TOPBP1; promoting recruitment of TOPBP1 to DNA damage sites during S-phase. Post-translationally, phosphorylation at Ser-748 by CK2 during S-phase in response to DNA damage promotes interaction with TOPBP1 and double-strand break (DSB) repair via homologous recombination.

It localises to the nucleus. The protein resides in the chromosome. In terms of biological role, component of the 17S U2 SnRNP complex of the spliceosome, a large ribonucleoprotein complex that removes introns from transcribed pre-mRNAs. The 17S U2 SnRNP complex (1) directly participates in early spliceosome assembly and (2) mediates recognition of the intron branch site during pre-mRNA splicing by promoting the selection of the pre-mRNA branch-site adenosine, the nucleophile for the first step of splicing. Within the 17S U2 SnRNP complex, HTATSF1 is required to stabilize the branchpoint-interacting stem loop. HTATSF1 is displaced from the 17S U2 SnRNP complex before the stable addition of the 17S U2 SnRNP complex to the spliceosome, destabilizing the branchpoint-interacting stem loop and allowing to probe intron branch site sequences. Also acts as a regulator of transcriptional elongation, possibly by mediating the reciprocal stimulatory effect of splicing on transcriptional elongation. Involved in double-strand break (DSB) repair via homologous recombination in S-phase by promoting the recruitment of TOPBP1 to DNA damage sites. Mechanistically, HTATSF1 is (1) recruited to DNA damage sites in S-phase via interaction with poly-ADP-ribosylated RPA1 and (2) phosphorylated by CK2, promoting recruitment of TOPBP1, thereby facilitating RAD51 nucleofilaments formation and RPA displacement, followed by homologous recombination. The sequence is that of 17S U2 SnRNP complex component HTATSF1 (HTATSF1) from Pongo abelii (Sumatran orangutan).